The following is a 131-amino-acid chain: Small ribosomal subunit protein uS12 (131 aa).

Aspartate 89 carries the post-translational modification 3-methylthioaspartic acid. The interval 106–131 (GVDGRKQGRSKYGAKKAKVAKTASAK) is disordered. Residues 112-124 (QGRSKYGAKKAKV) show a composition bias toward basic residues.

The protein belongs to the universal ribosomal protein uS12 family. Part of the 30S ribosomal subunit. Contacts proteins S8 and S17. May interact with IF1 in the 30S initiation complex.

Functionally, with S4 and S5 plays an important role in translational accuracy. In terms of biological role, interacts with and stabilizes bases of the 16S rRNA that are involved in tRNA selection in the A site and with the mRNA backbone. Located at the interface of the 30S and 50S subunits, it traverses the body of the 30S subunit contacting proteins on the other side and probably holding the rRNA structure together. The combined cluster of proteins S8, S12 and S17 appears to hold together the shoulder and platform of the 30S subunit. This Endomicrobium trichonymphae protein is Small ribosomal subunit protein uS12.